The primary structure comprises 518 residues: Protein nucleotidyltransferase YdiU (518 aa).

ATP contacts are provided by G100, G102, R103, K123, D135, G136, R193, and R200. The Proton acceptor role is filled by D270. The Mg(2+) site is built by N271 and D280. D280 lines the ATP pocket.

The protein belongs to the SELO family. Requires Mg(2+) as cofactor. Mn(2+) serves as cofactor.

It catalyses the reaction L-seryl-[protein] + ATP = 3-O-(5'-adenylyl)-L-seryl-[protein] + diphosphate. The catalysed reaction is L-threonyl-[protein] + ATP = 3-O-(5'-adenylyl)-L-threonyl-[protein] + diphosphate. The enzyme catalyses L-tyrosyl-[protein] + ATP = O-(5'-adenylyl)-L-tyrosyl-[protein] + diphosphate. It carries out the reaction L-histidyl-[protein] + UTP = N(tele)-(5'-uridylyl)-L-histidyl-[protein] + diphosphate. It catalyses the reaction L-seryl-[protein] + UTP = O-(5'-uridylyl)-L-seryl-[protein] + diphosphate. The catalysed reaction is L-tyrosyl-[protein] + UTP = O-(5'-uridylyl)-L-tyrosyl-[protein] + diphosphate. Its function is as follows. Nucleotidyltransferase involved in the post-translational modification of proteins. It can catalyze the addition of adenosine monophosphate (AMP) or uridine monophosphate (UMP) to a protein, resulting in modifications known as AMPylation and UMPylation. The protein is Protein nucleotidyltransferase YdiU of Xanthomonas oryzae pv. oryzae (strain MAFF 311018).